The primary structure comprises 247 residues: 1-(5-phosphoribosyl)-5-[(5-phosphoribosylamino)methylideneamino] imidazole-4-carboxamide isomerase (247 aa).

Asp-8 (proton acceptor) is an active-site residue. Asp-129 (proton donor) is an active-site residue.

Belongs to the HisA/HisF family.

It localises to the cytoplasm. It catalyses the reaction 1-(5-phospho-beta-D-ribosyl)-5-[(5-phospho-beta-D-ribosylamino)methylideneamino]imidazole-4-carboxamide = 5-[(5-phospho-1-deoxy-D-ribulos-1-ylimino)methylamino]-1-(5-phospho-beta-D-ribosyl)imidazole-4-carboxamide. The protein operates within amino-acid biosynthesis; L-histidine biosynthesis; L-histidine from 5-phospho-alpha-D-ribose 1-diphosphate: step 4/9. This chain is 1-(5-phosphoribosyl)-5-[(5-phosphoribosylamino)methylideneamino] imidazole-4-carboxamide isomerase, found in Bradyrhizobium sp. (strain BTAi1 / ATCC BAA-1182).